A 292-amino-acid polypeptide reads, in one-letter code: 33 kDa chaperonin (292 aa).

Disulfide bonds link Cys-230/Cys-232 and Cys-263/Cys-266.

The protein belongs to the HSP33 family. In terms of processing, under oxidizing conditions two disulfide bonds are formed involving the reactive cysteines. Under reducing conditions zinc is bound to the reactive cysteines and the protein is inactive.

It localises to the cytoplasm. Its function is as follows. Redox regulated molecular chaperone. Protects both thermally unfolding and oxidatively damaged proteins from irreversible aggregation. Plays an important role in the bacterial defense system toward oxidative stress. The chain is 33 kDa chaperonin from Salmonella choleraesuis (strain SC-B67).